The primary structure comprises 530 residues: PC4 and SFRS1-interacting protein (530 aa).

One can recognise a PWWP domain in the interval 1–64 (MTRDFKPGDL…PKDIFPYSEN (64 aa)). Residue lysine 75 forms a Glycyl lysine isopeptide (Lys-Gly) (interchain with G-Cter in SUMO2) linkage. Residues 86–349 (NNPKVKFSSQ…VEKKRETSMD (264 aa)) form a disordered region. Over residues 92 to 104 (FSSQQASTKQSNA) the composition is skewed to polar residues. Serine 102, serine 105, and serine 106 each carry phosphoserine. Residues 113–135 (KETSVSKEDTDHEEKASNEDVTK) are compositionally biased toward basic and acidic residues. Residues threonine 115 and threonine 122 each carry the phosphothreonine modification. Serine 129 is subject to Phosphoserine. Threonine 141 carries the post-translational modification Phosphothreonine. The span at 144–153 (AARRGRKRKA) shows a compositional bias: basic residues. Positions 146–156 (RRGRKRKAEKQ) match the Nuclear localization signal motif. Threonine 167 carries the phosphothreonine modification. Residues serine 177 and serine 206 each carry the phosphoserine modification. A compositionally biased stretch (basic and acidic residues) spans 213-261 (EEDKSKKKGQEEKQPKKQLKKDEEGQKEEDKPRKEPDKKEGKKEVESKR). Serine 271 carries the post-translational modification Phosphoserine. Phosphothreonine is present on threonine 272. Serine 273 and serine 275 each carry phosphoserine. A compositionally biased stretch (acidic residues) spans 274-283 (DSEEEGDDQE). Residues 287–302 (KRKGGRNFQTAHRRNM) show a composition bias toward basic residues. A compositionally biased stretch (basic and acidic residues) spans 305 to 349 (GQHEKEAADRKRKQEEQMETEQQNKDEGKKPEVKKVEKKRETSMD). 2 coiled-coil regions span residues 306 to 334 (QHEK…EGKK) and 371 to 395 (NRCI…KHTE). Residues 340-417 (VEKKRETSMD…VSQIIMEKST (78 aa)) are integrase-binding domain (IBD). Serine 434 bears the Phosphoserine mark. Residue threonine 437 is modified to Phosphothreonine. Serine 443 is subject to Phosphoserine. Residues 446–473 (EQRQHEEANKTKDQGKKGPNKKLDKEQT) show a composition bias toward basic and acidic residues. The segment at 446–530 (EQRQHEEANK…ISLKDSTLDN (85 aa)) is disordered. A compositionally biased stretch (polar residues) spans 474 to 494 (GSKTLNGGSDAPDSNQAQHNG). Over residues 498-530 (EESKDKHEASSKKKPSNEERETEISLKDSTLDN) the composition is skewed to basic and acidic residues. The residue at position 517 (arginine 517) is a Citrulline. Phosphoserine is present on serine 522. Threonine 527 carries the post-translational modification Phosphothreonine.

This sequence belongs to the HDGF family. As to quaternary structure, monomer. Interacts with IFRD1/PC4. Interacts (via IBD domain) with POGZ (via IBM motif) and CDCA7L (via IBM motifs). Interacts (via IBD domain) with KMT2A (via IBM motifs) with a moderate affinity whereas interacts with the KMT2A-MEN1 complex with a greater affinity; MEN1 enhances interaction of KMT2A with PSIP1. Interacts (via IBD domain) with IWS1 (via IBM motif), MED1 (via IBM motif) and DBF4 (via IBM motifs). In terms of assembly, (Microbial infection) Interacts (via IBD domain) with feline immunodeficiency virus (FIV) integrase (IN), determining its nuclear localization, its tight association with chromatin and its protection from the proteasome. Citrullinated by PADI4.

It is found in the nucleus. Transcriptional coactivator involved in neuroepithelial stem cell differentiation and neurogenesis. Involved in particular in lens epithelial cell gene regulation and stress responses. May play an important role in lens epithelial to fiber cell terminal differentiation. May play a protective role during stress-induced apoptosis. The chain is PC4 and SFRS1-interacting protein (PSIP1) from Felis catus (Cat).